Here is a 782-residue protein sequence, read N- to C-terminus: Coiled-coil alpha-helical rod protein 1 (782 aa).

2 stretches are compositionally biased toward basic and acidic residues: residues 62-74 (ERDVSSDRQEPGR) and 208-218 (ETRRAGEAKEL). Disordered regions lie at residues 62–82 (ERDVSSDRQEPGRRGRSWGLE) and 177–218 (EQLS…AKEL). 3 coiled-coil regions span residues 82-314 (EGSQ…ELTR), 344-437 (LMVQ…NAVS), and 498-691 (VADV…QQEG).

Its subcellular location is the cytoplasm. The protein localises to the nucleus. In terms of biological role, may be a regulator of keratinocyte proliferation or differentiation. The polypeptide is Coiled-coil alpha-helical rod protein 1 (CCHCR1) (Pan troglodytes (Chimpanzee)).